We begin with the raw amino-acid sequence, 270 residues long: Peflin (270 aa).

Residues 1–97 (MSYQYGQGYS…YRQQGSAGNV (97 aa)) form a disordered region. Repeat copies occupy residues 22–30 (PPRAPYAGG), 44–54 (PPGQQYGGGSP), 62–70 (GPRAPYGGG), 72–81 (APGGPYGGYG), and 83–91 (PQGGPYRQQ). The 5 X 9 AA approximate tandem repeat of [AP]-P-G-G-P-Y-G-G-P-P stretch occupies residues 22 to 91 (PPRAPYAGGP…QPQGGPYRQQ (70 aa)). Low complexity-rich tracts occupy residues 26 to 47 (PYAGGPAAGQYGSPYGSAPPGQ) and 55 to 66 (YGSYGQPGPRAP). The span at 67–84 (YGGGQAPGGPYGGYGQPQ) shows a compositional bias: gly residues. 5 consecutive EF-hand domains span residues 100 to 135 (GVNPEAYQWFSTVDSDQSGYINAKELKQALMNFNNS), 141 to 169 (TCIMMLNMFDKTKSGRVDVFGFSALWTFL), 170 to 202 (QQWRAAFQQFDRDRSGSINTNEMHQALSQMGYN), 203 to 239 (LSPQFIQELVNRYSVRGGTGVLQLDRFIQVCTQLQSM), and 240 to 269 (TQAFREKDTGMTGNVRMSYEDFLSSAITRL). Residues D113, D115, S117, Y119, and E124 each contribute to the Ca(2+) site. Residues D180, D182, S184, S186, and E191 each coordinate Ca(2+).

In terms of assembly, heterodimer; heterodimerizes (via the EF-hand 5) with pdcd6.

The protein resides in the cytoplasm. It is found in the endoplasmic reticulum. Its subcellular location is the membrane. The protein localises to the cytoplasmic vesicle. It localises to the COPII-coated vesicle membrane. In terms of biological role, calcium-binding protein that acts as an adapter that bridges unrelated proteins or stabilizes weak protein-protein complexes in response to calcium. Acts as a negative regulator of ER-Golgi transport. This is Peflin from Danio rerio (Zebrafish).